The following is a 361-amino-acid chain: Arginine N(omega)-methyltransferase (361 aa).

Basic and acidic residues predominate over residues 1–17; the sequence is MRHVQEARAVPAEHEAR. The disordered stretch occupies residues 1 to 24; sequence MRHVQEARAVPAEHEARPAPVTMP. In terms of domain architecture, SAM-dependent MTase PRMT-type spans 65 to 361; the sequence is DADAFAQIAR…WSDFTLRVSI (297 aa).

The protein belongs to the class I-like SAM-binding methyltransferase superfamily. Protein arginine N-methyltransferase family.

It catalyses the reaction L-arginine + S-adenosyl-L-methionine = N(omega)-methyl-L-arginine + S-adenosyl-L-homocysteine + H(+). It participates in antibiotic biosynthesis. Functionally, involved in the biosynthesis of the glucosamine-nitrosourea antibiotic streptozotocin (SZN). Catalyzes the conversion of L-arginine to N(omega)-methyl-L-arginine (L-NMA), using S-adenosyl-L-methionine (SAM) as a methyl donor. This Streptomyces achromogenes subsp. streptozoticus protein is Arginine N(omega)-methyltransferase.